The following is a 158-amino-acid chain: N-alpha-acetyltransferase RimI (158 aa).

The 148-residue stretch at 8–155 (VTIGALTRAD…DAYTMRRDSG (148 aa)) folds into the N-acetyltransferase domain.

It belongs to the acetyltransferase family. RimI subfamily. Monomer. Interacts with TsaD. Interacts with GroS/GroES.

It catalyses the reaction N-terminal L-methionyl-L-alanyl-[protein] + acetyl-CoA = N-terminal N(alpha)-acetyl-L-methionyl-L-alanyl-[protein] + CoA + H(+). The enzyme catalyses N-terminal L-methionyl-L-seryl-[protein] + acetyl-CoA = N-terminal N(alpha)-acetyl-L-methionyl-L-seryl-[protein] + CoA + H(+). It carries out the reaction N-terminal L-methionyl-L-valyl-[protein] + acetyl-CoA = N-terminal N(alpha)-acetyl-L-methionyl-L-valyl-[protein] + CoA + H(+). The catalysed reaction is N-terminal L-methionyl-L-threonyl-[protein] + acetyl-CoA = N-terminal N(alpha)-acetyl-L-methionyl-L-threonyl-[protein] + CoA + H(+). It catalyses the reaction N-terminal L-methionyl-L-lysyl-[protein] + acetyl-CoA = N-terminal N(alpha)-acetyl-L-methionyl-L-lysyl-[protein] + CoA + H(+). The enzyme catalyses N-terminal L-methionyl-L-leucyl-[protein] + acetyl-CoA = N-terminal N(alpha)-acetyl-L-methionyl-L-leucyl-[protein] + CoA + H(+). It carries out the reaction N-terminal L-methionyl-L-phenylalanyl-[protein] + acetyl-CoA = N-terminal N(alpha)-acetyl-L-methionyl-L-phenylalanyl-[protein] + CoA + H(+). The catalysed reaction is N-terminal L-methionyl-L-tyrosyl-[protein] + acetyl-CoA = N-terminal N(alpha)-acetyl-L-methionyl-L-tyrosyl-[protein] + CoA + H(+). It catalyses the reaction N-terminal glycyl-[protein] + acetyl-CoA = N-terminal N(alpha)-acetylglycyl-[protein] + CoA + H(+). The enzyme catalyses N-terminal L-alanyl-[protein] + acetyl-CoA = N-terminal N(alpha)-acetyl-L-alanyl-[protein] + CoA + H(+). It carries out the reaction N-terminal L-seryl-[protein] + acetyl-CoA = N-terminal N(alpha)-acetyl-L-seryl-[protein] + CoA + H(+). The catalysed reaction is N-terminal L-valyl-[protein] + acetyl-CoA = N-terminal N(alpha)-acetyl-L-valyl-[protein] + CoA + H(+). It catalyses the reaction N-terminal L-cysteinyl-[protein] + acetyl-CoA = N-terminal N(alpha)-acetyl-L-cysteinyl-[protein] + CoA + H(+). The enzyme catalyses N-terminal L-threonyl-[protein] + acetyl-CoA = N-terminal N(alpha)-acetyl-L-threonyl-[protein] + CoA + H(+). N-alpha-acetyltransferase that specifically mediates the acetylation of N-terminal residues. Able to mediate acetylation of a wide variety of N-terminal residues, with preference for hydrophobic N-termini. Acetylates GroS/GroES and GroEL1. Able to acetylate the ribosomal protein bS18, but it is unclear whether it acetylates its N-terminal alanine residue. The protein is N-alpha-acetyltransferase RimI of Mycobacterium tuberculosis (strain ATCC 25618 / H37Rv).